Consider the following 1367-residue polypeptide: Probable serine/threonine-protein kinase pkgA (1367 aa).

Disordered stretches follow at residues 140–164 (IDENNNNNNNNNNNNNNNNNKNKTI), 264–429 (KNGK…LLSR), 456–556 (PTPL…SRKP), and 771–792 (PREEELSQTPLGGRLRSDSDPV). Over residues 143-162 (NNNNNNNNNNNNNNNNNKNK) the composition is skewed to low complexity. Over residues 271-282 (IKRPSPPLPPPQ) the composition is skewed to pro residues. Positions 287 to 326 (EQQKEQKEQQKEQQKEQQKEQQKEQEQKQQEPQKYVKFEI) are enriched in basic and acidic residues. The segment covering 340–381 (ISSSNISNEISKQQQQQQQQQQQQQQQQQQQQQQQQQQQQQQ) has biased composition (low complexity). The span at 399–421 (ANNNILTTPLSSQPTQSLETPST) shows a compositional bias: polar residues. The segment covering 506 to 517 (GEDEEEDEDDDN) has biased composition (acidic residues). Residues 531–544 (LKNKRPFKKTHVHH) are compositionally biased toward basic residues. The Protein kinase domain maps to 810-1236 (FEFIKPITKG…AEEIKSHPFF (427 aa)). Residues 816-824 (ITKGGYGKV) and lysine 839 each bind ATP. Residue aspartate 933 is the Proton acceptor of the active site. Disordered stretches follow at residues 971–1034 (FSPT…PSNT), 1084–1134 (FIPP…HNIH), and 1288–1312 (QNQNKESSTILTTSPPSTSSTTATA). The span at 979–1015 (NNQSSSSSSVSNIGGSNTIGSNISSTNNNNNNNNTTG) shows a compositional bias: low complexity. Residues 1025–1034 (NTETPIPSNT) are compositionally biased toward polar residues. 2 stretches are compositionally biased toward low complexity: residues 1092 to 1125 (QQPISNIPTTTTTTTTTTTGQQSQQQSQQQQQTT) and 1294 to 1312 (SSTILTTSPPSTSSTTATA). Positions 1237 to 1347 (KSINWKTILT…VNFQSLLELN (111 aa)) constitute an AGC-kinase C-terminal domain.

It belongs to the protein kinase superfamily. AGC Ser/Thr protein kinase family.

It catalyses the reaction L-seryl-[protein] + ATP = O-phospho-L-seryl-[protein] + ADP + H(+). The catalysed reaction is L-threonyl-[protein] + ATP = O-phospho-L-threonyl-[protein] + ADP + H(+). This Dictyostelium discoideum (Social amoeba) protein is Probable serine/threonine-protein kinase pkgA (pkgA).